The following is a 260-amino-acid chain: DNA repair protein RecO (260 aa).

It belongs to the RecO family.

Involved in DNA repair and RecF pathway recombination. The polypeptide is DNA repair protein RecO (Streptococcus suis (strain 98HAH33)).